The chain runs to 820 residues: DNA gyrase subunit A (820 aa).

The 466-residue stretch at 31 to 496 folds into the Topo IIA-type catalytic domain; sequence IPDVRDGLKP…TLTNIEIEDL (466 aa). Tyr119 (O-(5'-phospho-DNA)-tyrosine intermediate) is an active-site residue. The short motif at 523–529 is the GyrA-box element; that stretch reads QRRGGKG.

Belongs to the type II topoisomerase GyrA/ParC subunit family. As to quaternary structure, heterotetramer, composed of two GyrA and two GyrB chains. In the heterotetramer, GyrA contains the active site tyrosine that forms a transient covalent intermediate with DNA, while GyrB binds cofactors and catalyzes ATP hydrolysis.

The protein localises to the cytoplasm. It carries out the reaction ATP-dependent breakage, passage and rejoining of double-stranded DNA.. Its function is as follows. A type II topoisomerase that negatively supercoils closed circular double-stranded (ds) DNA in an ATP-dependent manner to modulate DNA topology and maintain chromosomes in an underwound state. Negative supercoiling favors strand separation, and DNA replication, transcription, recombination and repair, all of which involve strand separation. Also able to catalyze the interconversion of other topological isomers of dsDNA rings, including catenanes and knotted rings. Type II topoisomerases break and join 2 DNA strands simultaneously in an ATP-dependent manner. This chain is DNA gyrase subunit A, found in Lawsonia intracellularis (strain PHE/MN1-00).